The primary structure comprises 433 residues: Serine hydroxymethyltransferase (433 aa).

Position 121–123 (121–123) interacts with (6S)-5,6,7,8-tetrahydrofolate; sequence AHV. Lys227 is subject to N6-(pyridoxal phosphate)lysine. Glu243 lines the (6S)-5,6,7,8-tetrahydrofolate pocket.

Belongs to the SHMT family. Homodimer. Requires pyridoxal 5'-phosphate as cofactor.

It localises to the cytoplasm. It participates in amino-acid biosynthesis; glycine biosynthesis; glycine from L-serine: step 1/1. Functionally, catalyzes the reversible interconversion of serine and glycine with a modified folate serving as the one-carbon carrier. Also exhibits a pteridine-independent aldolase activity toward beta-hydroxyamino acids, producing glycine and aldehydes, via a retro-aldol mechanism. This chain is Serine hydroxymethyltransferase, found in Saccharolobus islandicus (strain M.14.25 / Kamchatka #1) (Sulfolobus islandicus).